We begin with the raw amino-acid sequence, 110 residues long: Large ribosomal subunit protein uL22 (110 aa).

Belongs to the universal ribosomal protein uL22 family. In terms of assembly, part of the 50S ribosomal subunit.

Functionally, this protein binds specifically to 23S rRNA; its binding is stimulated by other ribosomal proteins, e.g. L4, L17, and L20. It is important during the early stages of 50S assembly. It makes multiple contacts with different domains of the 23S rRNA in the assembled 50S subunit and ribosome. In terms of biological role, the globular domain of the protein is located near the polypeptide exit tunnel on the outside of the subunit, while an extended beta-hairpin is found that lines the wall of the exit tunnel in the center of the 70S ribosome. The chain is Large ribosomal subunit protein uL22 from Exiguobacterium sp. (strain ATCC BAA-1283 / AT1b).